A 294-amino-acid polypeptide reads, in one-letter code: Potassium-transporting ATPase subunit beta (294 aa).

The Cytoplasmic portion of the chain corresponds to 1–36; it reads MAALQEKKSCSQRMAEFRHYCWNPDTGQMLGRTPAR. Residues 37–57 traverse the membrane as a helical; Signal-anchor for type II membrane protein segment; that stretch reads WVWISLYYAGFYVVMTGLFAL. Topologically, residues 58–294 are extracellular; it reads CIYVLMQTID…KVEFKLTIQK (237 aa). Residues Asn-99, Asn-103, Asn-130, Asn-146, and Asn-161 are each glycosylated (N-linked (GlcNAc...) asparagine). Cysteines 131 and 152 form a disulfide. A disulfide bridge links Cys-162 with Cys-178. Asn-193 and Asn-225 each carry an N-linked (GlcNAc...) asparagine glycan. Residues 194–294 form an immunoglobulin-like region; it reads NTAPRVDCTF…KVEFKLTIQK (101 aa). Residues Cys-201 and Cys-266 are joined by a disulfide bond.

This sequence belongs to the X(+)/potassium ATPases subunit beta family. The ATPase pump is composed of two subunits: alpha (catalytic) and beta (regulatory). Interacts with alpha subunit ATP12A; this interaction is required for the formation of a functionally active pump and targeting at the plasma membrane. Interacts (via N-terminus) with alpha subunit ATP4A (via the P-domain). N-glycosylation is necessary for assembly and functional expression of the pump at the plasma membrane. Expressed in parietal cells (at protein level).

The protein resides in the apical cell membrane. The protein localises to the cell membrane. Its function is as follows. The beta subunit of the gastric H(+)/K(+) ATPase pump which transports H(+) ions in exchange for K(+) ions across the apical membrane of parietal cells. Plays a structural and regulatory role in the assembly and membrane targeting of a functionally active pump. Within a transport cycle, the transfer of a H(+) ion across the membrane is coupled to ATP hydrolysis and is associated with a transient phosphorylation of the alpha subunit that shifts the pump conformation from inward-facing (E1) to outward-facing state (E2). Interacts with the phosphorylation domain of the alpha subunit and functions as a ratchet, stabilizing the lumenal-open E2 conformation and preventing the reverse reaction of the transport cycle. The polypeptide is Potassium-transporting ATPase subunit beta (Atp4b) (Mus musculus (Mouse)).